Consider the following 366-residue polypeptide: Carbamoyl phosphate synthase small chain (366 aa).

The tract at residues 1 to 170 is CPSase; it reads MLKKRYLVLE…TKSPYVSTGY (170 aa). The L-glutamine site is built by Ser-47, Gly-221, and Gly-223. The 188-residue stretch at 173–360 folds into the Glutamine amidotransferase type-1 domain; the sequence is SVVLVDFGKK…IDMINEYKTK (188 aa). The active-site Nucleophile is Cys-248. 5 residues coordinate L-glutamine: Leu-249, Gln-252, Asn-290, Gly-292, and Tyr-293. Active-site residues include His-333 and Glu-335.

It belongs to the CarA family. Composed of two chains; the small (or glutamine) chain promotes the hydrolysis of glutamine to ammonia, which is used by the large (or ammonia) chain to synthesize carbamoyl phosphate. Tetramer of heterodimers (alpha,beta)4.

The catalysed reaction is hydrogencarbonate + L-glutamine + 2 ATP + H2O = carbamoyl phosphate + L-glutamate + 2 ADP + phosphate + 2 H(+). It carries out the reaction L-glutamine + H2O = L-glutamate + NH4(+). It participates in amino-acid biosynthesis; L-arginine biosynthesis; carbamoyl phosphate from bicarbonate: step 1/1. It functions in the pathway pyrimidine metabolism; UMP biosynthesis via de novo pathway; (S)-dihydroorotate from bicarbonate: step 1/3. In terms of biological role, small subunit of the glutamine-dependent carbamoyl phosphate synthetase (CPSase). CPSase catalyzes the formation of carbamoyl phosphate from the ammonia moiety of glutamine, carbonate, and phosphate donated by ATP, constituting the first step of 2 biosynthetic pathways, one leading to arginine and/or urea and the other to pyrimidine nucleotides. The small subunit (glutamine amidotransferase) binds and cleaves glutamine to supply the large subunit with the substrate ammonia. The protein is Carbamoyl phosphate synthase small chain of Staphylococcus saprophyticus subsp. saprophyticus (strain ATCC 15305 / DSM 20229 / NCIMB 8711 / NCTC 7292 / S-41).